The primary structure comprises 240 residues: MADS-box transcription factor 27 (240 aa).

In terms of domain architecture, MADS-box spans 1–61 (MGRGKIVIRR…GRLYEYSSTS (61 aa)). The K-box domain occupies 86-176 (LKFWQREAAS…YKKISLIRQE (91 aa)). Polar residues predominate over residues 220–231 (LPQHSDAEQSTA). The tract at residues 220 to 240 (LPQHSDAEQSTAPKLGLQLNP) is disordered.

In terms of tissue distribution, ubiquitous.

It is found in the nucleus. Functionally, probable transcription factor. The polypeptide is MADS-box transcription factor 27 (MADS27) (Oryza sativa subsp. japonica (Rice)).